Reading from the N-terminus, the 98-residue chain is Alpha-defensin 1 (98 aa).

The signal sequence occupies residues 1-19 (MRTLTLLTALLLLALQVQT). Positions 20–63 (QSLEETADQVPAQDQPGAEAQDITISFAGDERSAREASKSLIGT) are excised as a propeptide. Cystine bridges form between Cys66/Cys96, Cys68/Cys84, and Cys74/Cys95.

This sequence belongs to the alpha-defensin family. As to expression, paneth cells of the small bowel.

The protein localises to the secreted. Its function is as follows. Has broad-spectrum antimicrobial properties. The antimicrobial activity decreases in the present of salt in vitro. Binds anionic phospholipids, which leads to the aggregation of liposomes in vitro. Membrane permeabilization of the target cells is an essential part of the peptide's mode of antimicrobial activity. No hemolytic activity against sheep or horse erythrocytes. Has antibacterial activity against the bacterial horse pathogens Gram-positive R.equi ATCC 33701 P(-) (minimum bactericidal concentration or MBC=5 ug/ml) and R.equi ATCC 33701 P(+) (MBC=5 ug/ml), which are resistant against beta-lactam antibiotics. Also has antibacterial activity against highly infectious wild-type strain R.equi 85F P(+) (MBC=5 ug/ml), S.equi subsp. equi (MBC=5 ug/ml), S.equi subsp. zooepidemicus (MBC=5 ug/ml), S.dysgalactiae subsp. equisimilis (MBC=10 ug/ml), S.choleraesuis subsp. choleraesuis serovar Typhimurium (MBC=10 ug/ml), and P.multocida subsp. multocida (MBC=&gt;10 ug/ml). Probably contributes to the antimicrobial barrier function of the small bowel mucosa. The sequence is that of Alpha-defensin 1 from Equus caballus (Horse).